We begin with the raw amino-acid sequence, 195 residues long: Iron-sulfur flavoprotein AF_1519 (195 aa).

C45, C48, C51, and C57 together coordinate [4Fe-4S] cluster.

This sequence belongs to the SsuE family. Isf subfamily. As to quaternary structure, homodimer. Requires FMN as cofactor. The cofactor is [4Fe-4S] cluster.

In terms of biological role, redox-active protein probably involved in electron transport. The protein is Iron-sulfur flavoprotein AF_1519 of Archaeoglobus fulgidus (strain ATCC 49558 / DSM 4304 / JCM 9628 / NBRC 100126 / VC-16).